We begin with the raw amino-acid sequence, 89 residues long: Small ribosomal subunit protein uS15 (89 aa).

This sequence belongs to the universal ribosomal protein uS15 family. Part of the 30S ribosomal subunit. Forms a bridge to the 50S subunit in the 70S ribosome, contacting the 23S rRNA.

Its function is as follows. One of the primary rRNA binding proteins, it binds directly to 16S rRNA where it helps nucleate assembly of the platform of the 30S subunit by binding and bridging several RNA helices of the 16S rRNA. Forms an intersubunit bridge (bridge B4) with the 23S rRNA of the 50S subunit in the ribosome. The protein is Small ribosomal subunit protein uS15 of Treponema denticola (strain ATCC 35405 / DSM 14222 / CIP 103919 / JCM 8153 / KCTC 15104).